The sequence spans 267 residues: Large ribosomal subunit protein uL4 (267 aa).

Belongs to the universal ribosomal protein uL4 family. Part of the 50S ribosomal subunit.

Its function is as follows. One of the primary rRNA binding proteins, this protein initially binds near the 5'-end of the 23S rRNA. It is important during the early stages of 50S assembly. It makes multiple contacts with different domains of the 23S rRNA in the assembled 50S subunit and ribosome. Functionally, forms part of the polypeptide exit tunnel. This is Large ribosomal subunit protein uL4 from Saccharolobus islandicus (strain Y.N.15.51 / Yellowstone #2) (Sulfolobus islandicus).